Consider the following 60-residue polypeptide: Small ribosomal subunit protein bS21 (60 aa).

The segment at 39-60 is disordered; that stretch reads ETPQEKRKRKAVARRRQRTRRR. A compositionally biased stretch (basic residues) spans 44–60; sequence KRKRKAVARRRQRTRRR.

It belongs to the bacterial ribosomal protein bS21 family.

In Microcystis aeruginosa (strain NIES-843 / IAM M-2473), this protein is Small ribosomal subunit protein bS21.